Reading from the N-terminus, the 268-residue chain is Thiazole synthase (268 aa).

Lysine 108 serves as the catalytic Schiff-base intermediate with DXP. Residues glycine 169, 195-196, and 217-218 each bind 1-deoxy-D-xylulose 5-phosphate; these read AG and NS. The disordered stretch occupies residues 248-268; that stretch reads RLKENPLASPSSPLDGVISNN. The span at 255–268 shows a compositional bias: polar residues; the sequence is ASPSSPLDGVISNN.

Belongs to the ThiG family. In terms of assembly, homotetramer. Forms heterodimers with either ThiH or ThiS.

The protein localises to the cytoplasm. The enzyme catalyses [ThiS sulfur-carrier protein]-C-terminal-Gly-aminoethanethioate + 2-iminoacetate + 1-deoxy-D-xylulose 5-phosphate = [ThiS sulfur-carrier protein]-C-terminal Gly-Gly + 2-[(2R,5Z)-2-carboxy-4-methylthiazol-5(2H)-ylidene]ethyl phosphate + 2 H2O + H(+). It functions in the pathway cofactor biosynthesis; thiamine diphosphate biosynthesis. Catalyzes the rearrangement of 1-deoxy-D-xylulose 5-phosphate (DXP) to produce the thiazole phosphate moiety of thiamine. Sulfur is provided by the thiocarboxylate moiety of the carrier protein ThiS. In vitro, sulfur can be provided by H(2)S. The polypeptide is Thiazole synthase (Prochlorococcus marinus (strain NATL2A)).